Reading from the N-terminus, the 282-residue chain is Casein kinase II subunit beta-2 (282 aa).

Positions methionine 1–glutamate 92 are disordered. A compositionally biased stretch (basic and acidic residues) spans glutamate 13–proline 28. Polar residues-rich tracts occupy residues serine 29–valine 47 and arginine 61–serine 71. Over residues aspartate 75–glutamate 92 the composition is skewed to acidic residues.

Belongs to the casein kinase 2 subunit beta family. As to quaternary structure, heterotetramer of two catalytic alpha subunits and two regulatory beta subunits. Interacts with CCA1. Post-translationally, phosphorylated by alpha subunit.

The protein localises to the cytoplasm. It localises to the cytosol. It is found in the nucleus. Functionally, plays a complex role in regulating the basal catalytic activity of the alpha subunit. The tetrameric holoenzyme CK2, composed of two alpha and two beta subunits, phosphorylates the transcription factor PIF1 after an exposure to light, resulting in a proteasome-dependent degradation of PIF1 and promotion of photomorphogenesis. CK2 phosphorylates translation initiation factors. May participate in the regulation of the initiation of translation. This is Casein kinase II subunit beta-2 (CKB2) from Arabidopsis thaliana (Mouse-ear cress).